The sequence spans 625 residues: Tumor necrosis factor receptor superfamily member 11A (625 aa).

An N-terminal signal peptide occupies residues 1-30 (MAPRARRRRQLPAPLLALCVLLVPLQVTLQ). The Extracellular segment spans residues 31-214 (VTPPCTQERH…PKEAQAYLPS (184 aa)). 9 disulfide bridges follow: Cys35-Cys47, Cys48-Cys61, Cys51-Cys69, Cys72-Cys87, Cys93-Cys113, Cys115-Cys128, Cys125-Cys127, Cys134-Cys152, and Cys155-Cys170. TNFR-Cys repeat units follow at residues 35 to 69 (CTQE…DSVC), 72 to 113 (CGPD…PRRC), 115 to 152 (CTAG…DTVC), and 155 to 195 (CLLG…DVVC). Asn106 carries N-linked (GlcNAc...) asparagine glycosylation. Residues Cys134, Ala135, Phe138, Ser161, and Val163 each contribute to the Na(+) site. Residue Asn175 is glycosylated (N-linked (GlcNAc...) asparagine). An intrachain disulfide couples Cys176 to Cys195. A helical membrane pass occupies residues 215 to 234 (LIVLLLFISVVVVAAIIFGV). Over 235–625 (YYRKGGKALT…HTQGSGQCAE (391 aa)) the chain is Cytoplasmic. 3 disordered regions span residues 331–356 (TQGD…STGS), 388–413 (GTES…MPVS), and 479–524 (SMAE…FISS). Low complexity predominate over residues 499-511 (SGSSPSDQPPASG). Residues 512 to 524 (NVTGNSNSTFISS) show a composition bias toward polar residues. Residues 532–537 (GDIIVV) are required for interaction with EEIG1 and osteoclast differentiation. Positions 542–625 (TSQEGPGSAE…HTQGSGQCAE (84 aa)) are disordered. Residues 543–558 (SQEGPGSAEPESEPVG) are compositionally biased toward low complexity. Over residues 561 to 571 (VQEETLAHRDS) the composition is skewed to basic and acidic residues. Ser571 carries the post-translational modification Phosphoserine. A compositionally biased stretch (polar residues) spans 603–625 (RPVQEQGGAQTSLHTQGSGQCAE).

As to quaternary structure, binds to the clefts between the subunits of the TNFSF11 ligand trimer to form a heterohexamer. Part of a complex composed of EEIG1, TNFRSF11A/RANK, PLCG2, GAB2, TEC and BTK; complex formation increases in the presence of TNFSF11/RANKL. Interacts with TRAF1, TRAF2, TRAF3, TRAF5 and TRAF6. Interacts (via cytoplasmic domain) with GAB2. Interacts (via cytoplasmic domain); with EEIG1 (via N-terminus); when in the presence of TNFSF11/RANKL. As to expression, ubiquitous expression with high levels in trabecular bone, thymus, small intestine, lung, brain and kidney. Weakly expressed in spleen and bone marrow.

The protein localises to the cell membrane. It localises to the membrane raft. In terms of biological role, receptor for TNFSF11/RANKL/TRANCE/OPGL; essential for RANKL-mediated osteoclastogenesis. Its interaction with EEIG1 promotes osteoclastogenesis via facilitating the transcription of NFATC1 and activation of PLCG2. Involved in the regulation of interactions between T-cells and dendritic cells. This Mus musculus (Mouse) protein is Tumor necrosis factor receptor superfamily member 11A (Tnfrsf11a).